Here is a 236-residue protein sequence, read N- to C-terminus: MKYKLLPCLLAILLTGCDRTEVTLSFTPEMASFSNEFDFDPLRGPVKDFTQTLMDEQGEVTKRVSGTLSEEGCFDSLELLDLENNTVVALVLDANYYRDAETLEKRVRLQGKCQLAELPSAGVSWETDDNGFVIKASSKQMQMEYRYDDQGYPLGKTTKSNDKTLSVSATPSTDPIKKLDYTAVTLLNNQRVGNVKQSCEYDNHANPVDCQLIIVDEGVKPAVERVYTIKNTIDYY.

Positions 1–16 (MKYKLLPCLLAILLTG) are cleaved as a signal peptide. Residue Cys17 is the site of N-palmitoyl cysteine attachment. A lipid anchor (S-diacylglycerol cysteine) is attached at Cys17.

Belongs to the UPF0257 family.

It localises to the cell membrane. The polypeptide is UPF0257 lipoprotein YnfC (Escherichia coli O81 (strain ED1a)).